Reading from the N-terminus, the 137-residue chain is 15 kDa protein A (137 aa).

A signal peptide spans 1–20 (MAGVWKVLVVLVGLAVVACA). Cystine bridges form between Cys77-Cys88 and Cys99-Cys116.

It belongs to the cathelicidin family. As to expression, large granules of neutrophils.

The protein localises to the secreted. Functionally, binds to bacterial lipopolysaccharides (LPS), potentiates strongly the early antibacterial effects of BPI. Inhibits the late lethal action of BPI. The polypeptide is 15 kDa protein A (Oryctolagus cuniculus (Rabbit)).